We begin with the raw amino-acid sequence, 156 residues long: ATP synthase subunit b (156 aa).

Residues 12 to 32 traverse the membrane as a helical segment; the sequence is IAFAIFVWFCVKYVWPPITAA.

Belongs to the ATPase B chain family. F-type ATPases have 2 components, F(1) - the catalytic core - and F(0) - the membrane proton channel. F(1) has five subunits: alpha(3), beta(3), gamma(1), delta(1), epsilon(1). F(0) has three main subunits: a(1), b(2) and c(10-14). The alpha and beta chains form an alternating ring which encloses part of the gamma chain. F(1) is attached to F(0) by a central stalk formed by the gamma and epsilon chains, while a peripheral stalk is formed by the delta and b chains.

It is found in the cell inner membrane. Functionally, f(1)F(0) ATP synthase produces ATP from ADP in the presence of a proton or sodium gradient. F-type ATPases consist of two structural domains, F(1) containing the extramembraneous catalytic core and F(0) containing the membrane proton channel, linked together by a central stalk and a peripheral stalk. During catalysis, ATP synthesis in the catalytic domain of F(1) is coupled via a rotary mechanism of the central stalk subunits to proton translocation. In terms of biological role, component of the F(0) channel, it forms part of the peripheral stalk, linking F(1) to F(0). This Marinobacter nauticus (strain ATCC 700491 / DSM 11845 / VT8) (Marinobacter aquaeolei) protein is ATP synthase subunit b.